A 427-amino-acid polypeptide reads, in one-letter code: Enolase (427 aa).

Q163 contacts (2R)-2-phosphoglycerate. The active-site Proton donor is E205. Positions 242, 285, and 312 each coordinate Mg(2+). Residues K337, R366, S367, and K388 each coordinate (2R)-2-phosphoglycerate. K337 serves as the catalytic Proton acceptor.

This sequence belongs to the enolase family. Mg(2+) serves as cofactor.

Its subcellular location is the cytoplasm. It localises to the secreted. The protein localises to the cell surface. The enzyme catalyses (2R)-2-phosphoglycerate = phosphoenolpyruvate + H2O. Its pathway is carbohydrate degradation; glycolysis; pyruvate from D-glyceraldehyde 3-phosphate: step 4/5. In terms of biological role, catalyzes the reversible conversion of 2-phosphoglycerate (2-PG) into phosphoenolpyruvate (PEP). It is essential for the degradation of carbohydrates via glycolysis. The polypeptide is Enolase (Herminiimonas arsenicoxydans).